A 192-amino-acid chain; its full sequence is Protein SHORT HYPOCOTYL IN WHITE LIGHT 1 (192 aa).

The Nuclear localization signal motif lies at 43–50 (FRRLNRSL). The segment at 70–92 (GGDNYDVVPDDDGFSDDDDEEDE) is disordered. Acidic residues predominate over residues 77-92 (VPDDDGFSDDDDEEDE). The next 2 helical transmembrane spans lie at 122 to 142 (ILPA…ILLL) and 159 to 179 (GGTV…ASFF).

As to quaternary structure, interacts with HY5 and COP1 in the nucleus. Expressed in young seedlings (e.g. hypocotyl and cotyledons) and in green tissues (e.g. leaves, stems, sepals, and young siliques).

Its subcellular location is the nucleus membrane. In terms of biological role, negative regulator of photomorphogenesis modulating both light and abscisic acid (ABA) signaling pathways. Negatively regulates the light-mediated inhibition of hypocotyl elongation, probably in a PHYB-mediated signaling pathway, but promotes flowering time (especially in long days) and lateral root formation. Enhances light-regulated gene expression. Promotes COP1-mediated degradation of HY5 during seedling development (e.g. hypocotyl growth) through enhanced ubiquitination in the darkness. Also involved in root gravitropism. The sequence is that of Protein SHORT HYPOCOTYL IN WHITE LIGHT 1 from Arabidopsis thaliana (Mouse-ear cress).